Reading from the N-terminus, the 453-residue chain is Tubulin delta chain (453 aa).

GTP is bound at residue 143–149 (AGGTGSG).

The protein belongs to the tubulin family. Found in a complex with TEDC1, TEDC2, TUBE1 and TUBD1.

The protein localises to the nucleus. It localises to the cytoplasm. Its subcellular location is the cytoskeleton. It is found in the microtubule organizing center. The protein resides in the centrosome. The protein localises to the centriole. It localises to the cell projection. Its subcellular location is the cilium. Acts as a positive regulator of hedgehog signaling and regulates ciliary function. The sequence is that of Tubulin delta chain (TUBD1) from Macaca fascicularis (Crab-eating macaque).